Reading from the N-terminus, the 38-residue chain is Large ribosomal subunit protein bL36 (38 aa).

The protein belongs to the bacterial ribosomal protein bL36 family.

The polypeptide is Large ribosomal subunit protein bL36 (Sorangium cellulosum (strain So ce56) (Polyangium cellulosum (strain So ce56))).